The following is a 265-amino-acid chain: 3-methyl-2-oxobutanoate hydroxymethyltransferase (265 aa).

Mg(2+)-binding residues include D45 and D84. 3-methyl-2-oxobutanoate-binding positions include 45 to 46 (DS), D84, and K112. E114 provides a ligand contact to Mg(2+). Catalysis depends on E181, which acts as the Proton acceptor.

This sequence belongs to the PanB family. As to quaternary structure, homodecamer; pentamer of dimers. Requires Mg(2+) as cofactor.

The protein resides in the cytoplasm. It catalyses the reaction 3-methyl-2-oxobutanoate + (6R)-5,10-methylene-5,6,7,8-tetrahydrofolate + H2O = 2-dehydropantoate + (6S)-5,6,7,8-tetrahydrofolate. The protein operates within cofactor biosynthesis; (R)-pantothenate biosynthesis; (R)-pantoate from 3-methyl-2-oxobutanoate: step 1/2. In terms of biological role, catalyzes the reversible reaction in which hydroxymethyl group from 5,10-methylenetetrahydrofolate is transferred onto alpha-ketoisovalerate to form ketopantoate. In Pectobacterium carotovorum subsp. carotovorum (strain PC1), this protein is 3-methyl-2-oxobutanoate hydroxymethyltransferase.